The primary structure comprises 222 residues: Flagellar L-ring protein (222 aa).

The first 18 residues, 1 to 18 (MKTTRAIAMLGLLLGLAA), serve as a signal peptide directing secretion. The N-palmitoyl cysteine moiety is linked to residue Cys19. A lipid anchor (S-diacylglycerol cysteine) is attached at Cys19.

This sequence belongs to the FlgH family. As to quaternary structure, the basal body constitutes a major portion of the flagellar organelle and consists of four rings (L,P,S, and M) mounted on a central rod.

The protein resides in the cell outer membrane. It is found in the bacterial flagellum basal body. Functionally, assembles around the rod to form the L-ring and probably protects the motor/basal body from shearing forces during rotation. The protein is Flagellar L-ring protein of Thiobacillus denitrificans (strain ATCC 25259 / T1).